Here is a 576-residue protein sequence, read N- to C-terminus: Rho GTPase-activating protein gacP (576 aa).

A coiled-coil region spans residues 123–189 (LKSIIKTELK…RTNFERVGID (67 aa)). Residues 277 to 462 (EDLSVLLNRE…TIIQNFDRIF (186 aa)) form the Rho-GAP domain. The segment at 472 to 576 (VPDTYVPPPN…DEGDAVELSD (105 aa)) is disordered. Residues 482–500 (NTRNNSVNNFNNVQPSSFS) show a composition bias toward low complexity. The span at 501-513 (ASTSRSINLNKST) shows a compositional bias: polar residues. The span at 514–530 (NNPNINDDNNNNNNINN) shows a compositional bias: low complexity. A compositionally biased stretch (acidic residues) spans 565-576 (SFDEGDAVELSD).

It localises to the cytoplasm. Rho GTPase-activating protein involved in the signal transduction pathway. This chain is Rho GTPase-activating protein gacP (gacP), found in Dictyostelium discoideum (Social amoeba).